The chain runs to 707 residues: DNA ligase (707 aa).

NAD(+) contacts are provided by residues 36 to 40 (DADFD), 85 to 86 (SL), and E116. K118 serves as the catalytic N6-AMP-lysine intermediate. 4 residues coordinate NAD(+): R139, E180, K298, and K322. Zn(2+) is bound by residues C416, C419, C434, and C440. Residues 613-707 (AASSKIAGRS…STHVDPERMV (95 aa)) form the BRCT domain.

The protein belongs to the NAD-dependent DNA ligase family. LigA subfamily. Mg(2+) is required as a cofactor. The cofactor is Mn(2+).

It catalyses the reaction NAD(+) + (deoxyribonucleotide)n-3'-hydroxyl + 5'-phospho-(deoxyribonucleotide)m = (deoxyribonucleotide)n+m + AMP + beta-nicotinamide D-nucleotide.. DNA ligase that catalyzes the formation of phosphodiester linkages between 5'-phosphoryl and 3'-hydroxyl groups in double-stranded DNA using NAD as a coenzyme and as the energy source for the reaction. It is essential for DNA replication and repair of damaged DNA. The polypeptide is DNA ligase (Nitrosospira multiformis (strain ATCC 25196 / NCIMB 11849 / C 71)).